Reading from the N-terminus, the 611-residue chain is Probable inactive purple acid phosphatase 27 (611 aa).

The signal sequence occupies residues Met-1 to Ser-18. 2 N-linked (GlcNAc...) asparagine glycosylation sites follow: Asn-263 and Asn-271. Asp-293 is a Fe cation binding site. Asn-314 carries an N-linked (GlcNAc...) asparagine glycan. Residues Asp-334 and Tyr-337 each coordinate Fe cation. Asp-334 contacts Zn(2+). Positions 367, 456, and 498 each coordinate Zn(2+). Asn-367 serves as a coordination point for substrate. Substrate is bound at residue His-498–His-500. His-500 serves as a coordination point for Fe cation.

It belongs to the metallophosphoesterase superfamily. Purple acid phosphatase family. Homodimer. Fe cation serves as cofactor. Requires Zn(2+) as cofactor. In terms of tissue distribution, expressed in roots, stems, leaves, flowers and siliques.

Its subcellular location is the secreted. The chain is Probable inactive purple acid phosphatase 27 (PAP27) from Arabidopsis thaliana (Mouse-ear cress).